The chain runs to 126 residues: Urease subunit beta (126 aa).

Belongs to the urease beta subunit family. Heterotrimer of UreA (gamma), UreB (beta) and UreC (alpha) subunits. Three heterotrimers associate to form the active enzyme.

It localises to the cytoplasm. It carries out the reaction urea + 2 H2O + H(+) = hydrogencarbonate + 2 NH4(+). It participates in nitrogen metabolism; urea degradation; CO(2) and NH(3) from urea (urease route): step 1/1. This is Urease subunit beta from Gloeothece citriformis (strain PCC 7424) (Cyanothece sp. (strain PCC 7424)).